The following is a 1881-amino-acid chain: Kinesin-like protein KIF26A (1881 aa).

3 disordered regions span residues 20 to 66, 145 to 193, and 309 to 330; these read PARE…AGGG, PASH…PPGP, and ASKR…STYP. Residue serine 30 is modified to Phosphoserine. Positions 364–718 constitute a Kinesin motor domain; sequence KVKVMLRIWP…VQLAARIHRL (355 aa). 462 to 469 contributes to the ATP binding site; the sequence is GHMSLGKS. Disordered stretches follow at residues 718 to 778, 794 to 827, 846 to 982, 1078 to 1104, 1118 to 1266, 1328 to 1425, 1442 to 1633, and 1652 to 1698; these read LRRK…SSEQ, SDRE…RDAD, GSEA…QAAL, YTSQ…GSPA, LSES…PRLP, SGSL…PYRP, SKVR…SGEL, and YESM…TGLQ. Residues 742-751 show a composition bias toward basic residues; it reads RRPPHLRPFH. A compositionally biased stretch (basic and acidic residues) spans 818–827; the sequence is RPSEGPRDAD. Positions 905 to 915 are enriched in polar residues; that stretch reads SDPSKTGTQSE. Over residues 940–950 the composition is skewed to pro residues; it reads LPSPAPPPPRQ. Positions 1084–1095 are enriched in low complexity; it reads EGPGDPGEFPEG. The segment covering 1151 to 1162 has biased composition (basic and acidic residues); the sequence is EESKVRSSECGR. Position 1257 is a phosphoserine (serine 1257). Residues 1328–1353 are compositionally biased toward low complexity; that stretch reads SGSLKTTSGSKKSVSPKGAFFPRPSG. The span at 1366–1378 shows a compositional bias: polar residues; sequence LEQSTALTPTQAL. The span at 1390–1399 shows a compositional bias: basic and acidic residues; that stretch reads RGEEEARPSG. Residues 1400–1412 are compositionally biased toward polar residues; sequence RSDSSVPKATSSL. 3 stretches are compositionally biased toward low complexity: residues 1477–1489, 1524–1537, and 1575–1587; these read PAKG…PPAG, PGPR…PGIG, and WGST…NDSG. Residues 1616 to 1629 show a composition bias toward polar residues; sequence RYSSGHGSDNSSVL. At serine 1654 the chain carries Phosphoserine. Over residues 1664 to 1675 the composition is skewed to low complexity; that stretch reads SASSAPDSMSES. A compositionally biased stretch (basic residues) spans 1685 to 1698; it reads RSLKSPKKRATGLQ. Residues 1780-1812 adopt a coiled-coil conformation; it reads LRLAERRQQRLQEVQAKRDHLCEELAETQGRLM.

Belongs to the TRAFAC class myosin-kinesin ATPase superfamily. Kinesin family. KIF26 subfamily. As to quaternary structure, interacts with GRB2 (via SH2 domain). As to expression, expressed in several neuronal populations.

It localises to the cytoplasm. Its subcellular location is the cytoskeleton. Functionally, atypical kinesin that plays a key role in enteric neuron development. Acts by repressing a cell growth signaling pathway in the enteric nervous system development, possibly via its interaction with GRB2 that prevents GRB2-binding to SHC, thereby attenating the GDNF-Ret signaling. Binds to microtubules but lacks microtubule-based motility due to the absence of ATPase activity. Plays a critical role in cerebral cortical development. It probably acts as a microtubule stabilizer that regulates neurite growth and radial migration of cortical excitatory neurons. This is Kinesin-like protein KIF26A (Kif26a) from Mus musculus (Mouse).